Reading from the N-terminus, the 371-residue chain is Chorismate synthase (371 aa).

NADP(+) contacts are provided by arginine 48 and arginine 54. FMN-binding positions include 132-134, 244-245, glycine 289, 304-308, and arginine 330; these read RSS, NA, and KPTSS.

It belongs to the chorismate synthase family. In terms of assembly, homotetramer. The cofactor is FMNH2.

It carries out the reaction 5-O-(1-carboxyvinyl)-3-phosphoshikimate = chorismate + phosphate. It participates in metabolic intermediate biosynthesis; chorismate biosynthesis; chorismate from D-erythrose 4-phosphate and phosphoenolpyruvate: step 7/7. Catalyzes the anti-1,4-elimination of the C-3 phosphate and the C-6 proR hydrogen from 5-enolpyruvylshikimate-3-phosphate (EPSP) to yield chorismate, which is the branch point compound that serves as the starting substrate for the three terminal pathways of aromatic amino acid biosynthesis. This reaction introduces a second double bond into the aromatic ring system. This is Chorismate synthase from Methylobacterium nodulans (strain LMG 21967 / CNCM I-2342 / ORS 2060).